Here is a 318-residue protein sequence, read N- to C-terminus: Cuticle collagen dpy-7 (318 aa).

4 triple-helical region regions span residues 101–130 (GPIG…DGLD), 147–206 (GPPG…PGDD), 209–235 (GGTG…NGLP), and 240–278 (GPPG…PGGH). A disordered region spans residues 101–318 (GPIGPPGVSG…GYSGGGYGKK (218 aa)). Positions 187–204 (PQGEPGEQGEPGIKGPPG) are enriched in low complexity. Composition is skewed to pro residues over residues 216–228 (PPGP…PKGP) and 250–268 (PPGP…PFGP). Residues 309-318 (GYSGGGYGKK) are compositionally biased toward gly residues.

Belongs to the cuticular collagen family. As to quaternary structure, collagen polypeptide chains are complexed within the cuticle by disulfide bonds and other types of covalent cross-links.

In terms of biological role, nematode cuticles are composed largely of collagen-like proteins. The cuticle functions both as an exoskeleton and as a barrier to protect the worm from its environment. Mutations in dpy-7 affects the body shape. In Caenorhabditis elegans, this protein is Cuticle collagen dpy-7 (dpy-7).